Consider the following 456-residue polypeptide: RuvB-like helicase 1 (456 aa).

ATP is bound at residue 71 to 78; sequence GGAGTGKT.

This sequence belongs to the RuvB family. In terms of assembly, may form heterododecamers with RVB2. Component of the SWR1 chromatin remodeling complex, the INO80 chromatin remodeling complex, and of the R2TP complex.

It is found in the nucleus. It catalyses the reaction ATP + H2O = ADP + phosphate + H(+). Functionally, DNA helicase which participates in several chromatin remodeling complexes, including the SWR1 and the INO80 complexes. The SWR1 complex mediates the ATP-dependent exchange of histone H2A for the H2A variant HZT1 leading to transcriptional regulation of selected genes by chromatin remodeling. The INO80 complex remodels chromatin by shifting nucleosomes and is involved in DNA repair. Also involved in pre-rRNA processing. This chain is RuvB-like helicase 1 (rvb1), found in Schizosaccharomyces pombe (strain 972 / ATCC 24843) (Fission yeast).